Here is a 445-residue protein sequence, read N- to C-terminus: Phosphoglucosamine mutase (445 aa).

Ser102 (phosphoserine intermediate) is an active-site residue. The Mg(2+) site is built by Ser102, Asp240, Asp242, and Asp244. At Ser102 the chain carries Phosphoserine.

The protein belongs to the phosphohexose mutase family. Mg(2+) serves as cofactor. Activated by phosphorylation.

It carries out the reaction alpha-D-glucosamine 1-phosphate = D-glucosamine 6-phosphate. In terms of biological role, catalyzes the conversion of glucosamine-6-phosphate to glucosamine-1-phosphate. The sequence is that of Phosphoglucosamine mutase from Mycobacterium marinum (strain ATCC BAA-535 / M).